Here is a 215-residue protein sequence, read N- to C-terminus: Probable phosphoglycerate mutase GpmB (215 aa).

Substrate contacts are provided by residues 8-15 (RHGETQWN), 21-22 (QG), arginine 58, arginine 60, 82-85 (ELNM), 104-105 (RR), and 151-152 (GI). Catalysis depends on histidine 9, which acts as the Tele-phosphohistidine intermediate. Glutamate 82 (proton donor/acceptor) is an active-site residue.

The protein belongs to the phosphoglycerate mutase family. GpmB subfamily.

It carries out the reaction (2R)-2-phosphoglycerate = (2R)-3-phosphoglycerate. Its pathway is carbohydrate degradation; glycolysis; pyruvate from D-glyceraldehyde 3-phosphate: step 3/5. In Escherichia coli O1:K1 / APEC, this protein is Probable phosphoglycerate mutase GpmB.